Here is a 209-residue protein sequence, read N- to C-terminus: Pyrrolidone-carboxylate peptidase (209 aa).

Residues glutamate 79, cysteine 142, and histidine 164 contribute to the active site.

Belongs to the peptidase C15 family. In terms of assembly, homotetramer.

It localises to the cytoplasm. It carries out the reaction Release of an N-terminal pyroglutamyl group from a polypeptide, the second amino acid generally not being Pro.. Functionally, removes 5-oxoproline from various penultimate amino acid residues except L-proline. The protein is Pyrrolidone-carboxylate peptidase of Saccharolobus islandicus (strain Y.N.15.51 / Yellowstone #2) (Sulfolobus islandicus).